A 74-amino-acid chain; its full sequence is Large ribosomal subunit protein uL29 (74 aa).

This sequence belongs to the universal ribosomal protein uL29 family.

The chain is Large ribosomal subunit protein uL29 from Cyanothece sp. (strain PCC 7425 / ATCC 29141).